The following is a 367-amino-acid chain: 3-dehydroquinate synthase (367 aa).

Residues 69-74 (DGEAFK), 103-107 (GVIGD), 127-128 (TT), lysine 140, and lysine 149 contribute to the NAD(+) site. Zn(2+)-binding residues include glutamate 182, histidine 245, and histidine 262.

Belongs to the sugar phosphate cyclases superfamily. Dehydroquinate synthase family. The cofactor is NAD(+). Co(2+) is required as a cofactor. Zn(2+) serves as cofactor.

It is found in the cytoplasm. It catalyses the reaction 7-phospho-2-dehydro-3-deoxy-D-arabino-heptonate = 3-dehydroquinate + phosphate. It functions in the pathway metabolic intermediate biosynthesis; chorismate biosynthesis; chorismate from D-erythrose 4-phosphate and phosphoenolpyruvate: step 2/7. Catalyzes the conversion of 3-deoxy-D-arabino-heptulosonate 7-phosphate (DAHP) to dehydroquinate (DHQ). In Pseudomonas syringae pv. tomato (strain ATCC BAA-871 / DC3000), this protein is 3-dehydroquinate synthase.